Here is a 358-residue protein sequence, read N- to C-terminus: DNA polymerase IV (358 aa).

Positions isoleucine 4–glycine 185 constitute a UmuC domain. Aspartate 8 and aspartate 103 together coordinate Mg(2+). Glutamate 104 is a catalytic residue.

This sequence belongs to the DNA polymerase type-Y family. Monomer. Mg(2+) is required as a cofactor.

The protein localises to the cytoplasm. It carries out the reaction DNA(n) + a 2'-deoxyribonucleoside 5'-triphosphate = DNA(n+1) + diphosphate. Functionally, poorly processive, error-prone DNA polymerase involved in untargeted mutagenesis. Copies undamaged DNA at stalled replication forks, which arise in vivo from mismatched or misaligned primer ends. These misaligned primers can be extended by PolIV. Exhibits no 3'-5' exonuclease (proofreading) activity. May be involved in translesional synthesis, in conjunction with the beta clamp from PolIII. The chain is DNA polymerase IV from Shewanella sp. (strain W3-18-1).